The chain runs to 187 residues: ADP-ribosylation factor-like protein 9 (187 aa).

Residues 25–32 (GLDGAGKT), 69–73 (EIGGS), and 126–129 (NKQD) each bind GTP.

Belongs to the small GTPase superfamily. Arf family.

In Homo sapiens (Human), this protein is ADP-ribosylation factor-like protein 9 (ARL9).